The sequence spans 375 residues: MDALQLANSAFAVDLFKQLCEKEPLGNVLFSPICLSTSLSLAQVGAKGDTANEIGQVLHFENVKDVPFGFQTVTSDVNKLSSFYSLKLIKRLYVDKSLNLSTEFISSTKRPYAKELETVDFKDKLEETKGQINNSIKDLTDGHFENILADNSVNDQTKILVVNAAYFVGKWMKKFSESETKECPFRVNKTDTKPVQMMNMEATFCMGNIDSINCKIIELPFQNKHLSMFILLPKDVEDESTGLEKIEKQLNSESLSQWTNPSTMANAKVKLSIPKFKVEKMIDPKACLENLGLKHIFSEDTSDFSGMSETKGVALSNVIHKVCLEITEDGGDSIEVPGARILQHKDELNADHPFIYIIRHNKTRNIIFFGKFCSP.

Residues N99, N133, N188, and N361 are each glycosylated (N-linked (GlcNAc...) asparagine).

The protein belongs to the serpin family. Ov-serpin subfamily. As to quaternary structure, interacts with IRF6. As to expression, normal mammary epithelial cells.

Its subcellular location is the secreted. It localises to the extracellular space. Tumor suppressor. It blocks the growth, invasion, and metastatic properties of mammary tumors. As it does not undergo the S (stressed) to R (relaxed) conformational transition characteristic of active serpins, it exhibits no serine protease inhibitory activity. The chain is Serpin B5 (SERPINB5) from Homo sapiens (Human).